Consider the following 125-residue polypeptide: uncharacterized protein (125 aa).

Residues 10–26 form a helical membrane-spanning segment; sequence IIILVCLMFLAIMVYIY.

Its subcellular location is the membrane. This is an uncharacterized protein from Rickettsia prowazekii (strain Madrid E).